A 203-amino-acid chain; its full sequence is Protein Nef (203 aa).

The tract at residues 1-25 is disordered; sequence MGNKWSKSWPQVRERMRRAPAPAAD. A lipid anchor (N-myristoyl glycine; by host) is attached at Gly2. The residue at position 6 (Ser6) is a Phosphoserine; by host. Residues 59–62 are acidic; interacts with host PACS1 and PACS2; stabilizes the interaction of NEF/MHC-I with host AP1M1; necessary for MHC-I internalization; it reads TEEE. The segment at 66–75 is SH3-binding; interaction with Src family tyrosine kinases; sequence PVKPQIPLRP. The PxxP; stabilizes the interaction of NEF/MHC-I with host AP1M1; necessary for MHC-I internalization signature appears at 69 to 72; it reads PQIP. Residues 105–121 form a mediates dimerization, Nef-PTE1 interaction region; it reads EILDLWVHNTQGYFPDW. Positions 145–177 are binding to ATP6V1H; that stretch reads VDPSEVEEANEGENNCLLHPICQHGIEDEEREV. Residues 161–162 carry the Dileucine internalization motif; necessary for CD4 internalization motif; sequence LL. The Diacidic; necessary for CD4 internalization motif lies at 171–172; sequence ED.

This sequence belongs to the lentivirus primate group Nef protein family. Monomer; cytosolic form. Homodimer; membrane bound form. Interacts with Nef associated p21-activated kinase (PAK2); this interaction activates PAK2. Associates with the Nef-MHC-I-AP1 complex; this complex is required for MHC-I internalization. Interacts (via C-terminus) with host PI3-kinase. Interacts with host PACS1; this interaction seems to be weak. Interacts with host PACS2. Interacts with host LCK and MAPK3; these interactions inhibit the kinase activity of the latter. Interacts with host ATP6V1H; this interaction may play a role in CD4 endocytosis. Associates with the CD4-Nef-AP2 complex; this complex is required for CD4 internalization. Interacts with host AP2 subunit alpha and AP2 subunit sigma2. Interacts with TCR-zeta chain; this interaction up-regulates the Fas ligand (FasL) surface expression. Interacts with host HCK, LYN, and SRC; these interactions activate the Src family kinases. Interacts with MAP3K5; this interaction inhibits the Fas and TNFR-mediated death signals. Interacts with beta-COP and PTE1. Interacts with human RACK1; this increases Nef phosphorylation by PKC. Interacts with TP53; this interaction decreases the half-life of TP53, protecting the infected cell against p53-mediated apoptosis. In terms of processing, the virion-associated Nef proteins are cleaved by the viral protease to release the soluble C-terminal core protein. Nef is probably cleaved concomitantly with viral structural proteins on maturation of virus particles. Myristoylated. Post-translationally, phosphorylated on serine residues, probably by host PKCdelta and theta.

It is found in the host cell membrane. Its subcellular location is the virion. It localises to the secreted. The protein resides in the host Golgi apparatus membrane. Factor of infectivity and pathogenicity, required for optimal virus replication. Alters numerous pathways of T-lymphocyte function and down-regulates immunity surface molecules in order to evade host defense and increase viral infectivity. Alters the functionality of other immunity cells, like dendritic cells, monocytes/macrophages and NK cells. Functionally, in infected CD4(+) T-lymphocytes, down-regulates the surface MHC-I, mature MHC-II, CD4, CD28, CCR5 and CXCR4 molecules. Mediates internalization and degradation of host CD4 through the interaction of with the cytoplasmic tail of CD4, the recruitment of AP-2 (clathrin adapter protein complex 2), internalization through clathrin coated pits, and subsequent transport to endosomes and lysosomes for degradation. Diverts host MHC-I molecules to the trans-Golgi network-associated endosomal compartments by an endocytic pathway to finally target them for degradation. MHC-I down-regulation may involve AP-1 (clathrin adapter protein complex 1) or possibly Src family kinase-ZAP70/Syk-PI3K cascade recruited by PACS2. In consequence infected cells are masked for immune recognition by cytotoxic T-lymphocytes. Decreasing the number of immune receptors also prevents reinfection by more HIV particles (superinfection). Down-regulates host SERINC3 and SERINC5 thereby excluding these proteins from the viral particles. Virion infectivity is drastically higher when SERINC3 or SERINC5 are excluded from the viral envelope, because these host antiviral proteins impair the membrane fusion event necessary for subsequent virion penetration. Its function is as follows. Bypasses host T-cell signaling by inducing a transcriptional program nearly identical to that of anti-CD3 cell activation. Interaction with TCR-zeta chain up-regulates the Fas ligand (FasL). Increasing surface FasL molecules and decreasing surface MHC-I molecules on infected CD4(+) cells send attacking cytotoxic CD8+ T-lymphocytes into apoptosis. In terms of biological role, plays a role in optimizing the host cell environment for viral replication without causing cell death by apoptosis. Protects the infected cells from apoptosis in order to keep them alive until the next virus generation is ready to strike. Inhibits the Fas and TNFR-mediated death signals by blocking MAP3K5/ASK1. Decreases the half-life of TP53, protecting the infected cell against p53-mediated apoptosis. Inhibits the apoptotic signals regulated by the Bcl-2 family proteins through the formation of a Nef/PI3-kinase/PAK2 complex that leads to activation of PAK2 and induces phosphorylation of host BAD. Extracellular Nef protein targets CD4(+) T-lymphocytes for apoptosis by interacting with CXCR4 surface receptors. In Human immunodeficiency virus type 1 group M subtype J (isolate SE9280) (HIV-1), this protein is Protein Nef.